The following is a 534-amino-acid chain: Peptide chain release factor 3 (534 aa).

The tr-type G domain maps to 9 to 278 (SRRRTFAIIS…FFVEHAPPPQ (270 aa)). GTP-binding positions include 18–25 (SHPDAGKT), 86–90 (DTPGH), and 140–143 (NKLD).

This sequence belongs to the TRAFAC class translation factor GTPase superfamily. Classic translation factor GTPase family. PrfC subfamily.

It is found in the cytoplasm. In terms of biological role, increases the formation of ribosomal termination complexes and stimulates activities of RF-1 and RF-2. It binds guanine nucleotides and has strong preference for UGA stop codons. It may interact directly with the ribosome. The stimulation of RF-1 and RF-2 is significantly reduced by GTP and GDP, but not by GMP. The chain is Peptide chain release factor 3 from Stenotrophomonas maltophilia (strain R551-3).